Consider the following 1078-residue polypeptide: Lon protease homolog, mitochondrial (1078 aa).

A mitochondrion-targeting transit peptide spans methionine 1 to asparagine 27. Over residues serine 71–proline 123 the composition is skewed to basic and acidic residues. Residues serine 71–glycine 179 are disordered. The segment covering proline 127 to aspartate 157 has biased composition (low complexity). Over residues serine 158–phenylalanine 172 the composition is skewed to basic and acidic residues. The 219-residue stretch at proline 182–alanine 400 folds into the Lon N-terminal domain. An ATP-binding site is contributed by glycine 548–threonine 555. The segment at asparagine 792–glutamate 825 is disordered. The span at glutamate 815–glutamate 825 shows a compositional bias: basic and acidic residues. Positions threonine 861 to glycine 1049 constitute a Lon proteolytic domain. Active-site residues include serine 955 and lysine 998.

Belongs to the peptidase S16 family. In terms of assembly, homohexamer or homoheptamer. Organized in a ring with a central cavity.

It localises to the mitochondrion matrix. The enzyme catalyses Hydrolysis of proteins in presence of ATP.. Functionally, ATP-dependent serine protease that mediates the selective degradation of misfolded, unassembled or oxidatively damaged polypeptides as well as certain short-lived regulatory proteins in the mitochondrial matrix. May also have a chaperone function in the assembly of inner membrane protein complexes. Participates in the regulation of mitochondrial gene expression and in the maintenance of the integrity of the mitochondrial genome. Binds to mitochondrial DNA in a site-specific manner. The sequence is that of Lon protease homolog, mitochondrial from Candida albicans (strain SC5314 / ATCC MYA-2876) (Yeast).